The primary structure comprises 358 residues: Peptide chain release factor 1 (358 aa).

Gln-233 carries the post-translational modification N5-methylglutamine.

Belongs to the prokaryotic/mitochondrial release factor family. Methylated by PrmC. Methylation increases the termination efficiency of RF1.

Its subcellular location is the cytoplasm. Functionally, peptide chain release factor 1 directs the termination of translation in response to the peptide chain termination codons UAG and UAA. In Lachnoclostridium phytofermentans (strain ATCC 700394 / DSM 18823 / ISDg) (Clostridium phytofermentans), this protein is Peptide chain release factor 1.